The sequence spans 262 residues: Small ribosomal subunit protein eS1 (262 aa).

It belongs to the eukaryotic ribosomal protein eS1 family. As to quaternary structure, component of the small ribosomal subunit. Mature ribosomes consist of a small (40S) and a large (60S) subunit. The 40S subunit contains about 33 different proteins and 1 molecule of RNA (18S). The 60S subunit contains about 49 different proteins and 3 molecules of RNA (25S, 5.8S and 5S).

It localises to the cytoplasm. The sequence is that of Small ribosomal subunit protein eS1 from Theileria annulata.